We begin with the raw amino-acid sequence, 526 residues long: Bifunctional purine biosynthesis protein PurH (526 aa).

An MGS-like domain is found at 1–147 (MSVIKRALIS…KNWKHVAIVT (147 aa)).

It belongs to the PurH family.

The enzyme catalyses (6R)-10-formyltetrahydrofolate + 5-amino-1-(5-phospho-beta-D-ribosyl)imidazole-4-carboxamide = 5-formamido-1-(5-phospho-D-ribosyl)imidazole-4-carboxamide + (6S)-5,6,7,8-tetrahydrofolate. It carries out the reaction IMP + H2O = 5-formamido-1-(5-phospho-D-ribosyl)imidazole-4-carboxamide. The protein operates within purine metabolism; IMP biosynthesis via de novo pathway; 5-formamido-1-(5-phospho-D-ribosyl)imidazole-4-carboxamide from 5-amino-1-(5-phospho-D-ribosyl)imidazole-4-carboxamide (10-formyl THF route): step 1/1. It functions in the pathway purine metabolism; IMP biosynthesis via de novo pathway; IMP from 5-formamido-1-(5-phospho-D-ribosyl)imidazole-4-carboxamide: step 1/1. This is Bifunctional purine biosynthesis protein PurH from Neisseria gonorrhoeae (strain ATCC 700825 / FA 1090).